We begin with the raw amino-acid sequence, 353 residues long: Photosystem II protein D1 (353 aa).

An N-acetylthreonine modification is found at threonine 2. Threonine 2 carries the phosphothreonine modification. 3 consecutive transmembrane segments (helical) span residues 29–46 (YIGWFGVVMIPTLLTATS), 118–133 (HFFLGICCYMGREWEL), and 142–156 (WIAVAYSAPVAAATA). Histidine 118 serves as a coordination point for chlorophyll a. Tyrosine 126 contributes to the pheophytin a binding site. [CaMn4O5] cluster-binding residues include aspartate 170 and glutamate 189. Residues 197 to 218 (FHMLGVAGVFGGSLFSAMHGSL) traverse the membrane as a helical segment. Histidine 198 contacts chlorophyll a. A quinone-binding positions include histidine 215 and 264-265 (SF). Fe cation is bound at residue histidine 215. Residue histidine 272 coordinates Fe cation. The chain crosses the membrane as a helical span at residues 274–288 (FLAAWPVVGIWFTAL). [CaMn4O5] cluster is bound by residues histidine 332, glutamate 333, aspartate 342, and alanine 344. Residues 345–353 (SVEAPSVNG) constitute a propeptide that is removed on maturation.

It belongs to the reaction center PufL/M/PsbA/D family. In terms of assembly, PSII is composed of 1 copy each of membrane proteins PsbA, PsbB, PsbC, PsbD, PsbE, PsbF, PsbH, PsbI, PsbJ, PsbK, PsbL, PsbM, PsbT, PsbX, PsbY, PsbZ, Psb30/Ycf12, at least 3 peripheral proteins of the oxygen-evolving complex and a large number of cofactors. It forms dimeric complexes. The D1/D2 heterodimer binds P680, chlorophylls that are the primary electron donor of PSII, and subsequent electron acceptors. It shares a non-heme iron and each subunit binds pheophytin, quinone, additional chlorophylls, carotenoids and lipids. D1 provides most of the ligands for the Mn4-Ca-O5 cluster of the oxygen-evolving complex (OEC). There is also a Cl(-1) ion associated with D1 and D2, which is required for oxygen evolution. The PSII complex binds additional chlorophylls, carotenoids and specific lipids. is required as a cofactor. Tyr-161 forms a radical intermediate that is referred to as redox-active TyrZ, YZ or Y-Z. Post-translationally, C-terminally processed by CTPA; processing is essential to allow assembly of the oxygen-evolving complex and thus photosynthetic growth.

The protein localises to the plastid. It is found in the chloroplast thylakoid membrane. The catalysed reaction is 2 a plastoquinone + 4 hnu + 2 H2O = 2 a plastoquinol + O2. In terms of biological role, photosystem II (PSII) is a light-driven water:plastoquinone oxidoreductase that uses light energy to abstract electrons from H(2)O, generating O(2) and a proton gradient subsequently used for ATP formation. It consists of a core antenna complex that captures photons, and an electron transfer chain that converts photonic excitation into a charge separation. The D1/D2 (PsbA/PsbD) reaction center heterodimer binds P680, the primary electron donor of PSII as well as several subsequent electron acceptors. The protein is Photosystem II protein D1 of Chaetosphaeridium globosum (Charophycean green alga).